We begin with the raw amino-acid sequence, 269 residues long: Nuclear egress protein 2 (269 aa).

Topologically, residues 1 to 247 (MSRRTYVRSE…VWKLALPVAN (247 aa)) are perinuclear space. A helical membrane pass occupies residues 248–268 (VTYALFIVIVLVVVLGAVLFW). A topological domain (nuclear) is located at residue Lys269.

Belongs to the herpesviridae NEC2 protein family. In terms of assembly, forms a heterohexameric complex with NEC1. Post-translationally, phosphorylated.

It is found in the host nucleus inner membrane. In terms of biological role, plays an essential role in virion nuclear egress, the first step of virion release from infected cell. Within the host nucleus, NEC1 interacts with the newly formed capsid through the vertexes and directs it to the inner nuclear membrane by associating with NEC2. Induces the budding of the capsid at the inner nuclear membrane as well as its envelopment into the perinuclear space. There, the NEC1/NEC2 complex promotes the fusion of the enveloped capsid with the outer nuclear membrane and the subsequent release of the viral capsid into the cytoplasm where it will reach the secondary budding sites in the host Golgi or trans-Golgi network. In Homo sapiens (Human), this protein is Nuclear egress protein 2.